A 740-amino-acid chain; its full sequence is Gramillins biosynthetic cluster protein FGSG_11657 (740 aa).

Disordered stretches follow at residues 353-391 (QADS…SSIP), 414-434 (SKLS…DAAS), 514-535 (PKEQ…GSSD), and 656-686 (EHEG…PQGD). The span at 656 to 667 (EHEGEGRADTNR) shows a compositional bias: basic and acidic residues. A compositionally biased stretch (polar residues) spans 668 to 682 (HVSTQSNMPTEQSLL).

It participates in mycotoxin biosynthesis. Part of the gene cluster that mediates the biosynthesis of gramillins A and B, bicyclic lipopeptides that induce cell death in maize leaves but not in wheat leaves. The nonribosomal peptide synthetase GRA1 incorporates respectively a glutamic adic (Glu), a leucine (Leu), a serine (Ser), a hydroxyglutamine (HOGln), a 2-amino decanoic acid, and 2 cysteins (CysB and CysA). The biosynthesis of 2-amino decanoic acid incorporated in gramillins could be initiated by a fatty acid synthase composed of the alpha and beta subunits FGSG_00036 and FGSG_11656. The cytochrome P450 monooxygenase FGSG_15680 could hydroxylate the fatty acid chain. Subsequent oxidation to the ketone by the oxidoreductase FGSG_00048 and transamination by aminotransferase FGSG_00049 could form 2-amino-decanoic acid. On the other hand, FGSG_15680 could also be responsible for the HO-modified glutamine at the gamma-position. Whether hydroxylation occurs on the fully assembled product or on the Gln residue prior to assembly into the gramillins requires further proof. The thioredoxin FGSG_00043 could also be required for the disulfide-bond formation between CysA and CysB. The specific involvement of the remaining proteins from the cluster is more difficult to discern, but could have broader regulatory (FGSG_00040 and FGSG_11657) or enzymatic functions (FGSG_00044 and FGSG_00045). The final C-domain of GRA1 does not possess the expected sequence of a termination CT domain, often implicated in macrocyclization and release of a cyclopeptidein fungal NRPs; and the thioesterase FGSG_00047 may act in concert with the terminal C-domain of GRA1 to catalyze the formation of the macrocyclic anhydride and release of the products. In Gibberella zeae (strain ATCC MYA-4620 / CBS 123657 / FGSC 9075 / NRRL 31084 / PH-1) (Wheat head blight fungus), this protein is Gramillins biosynthetic cluster protein FGSG_11657.